The chain runs to 146 residues: Holo-[acyl-carrier-protein] synthase (146 aa).

Positions 9 and 63 each coordinate Mg(2+).

Belongs to the P-Pant transferase superfamily. AcpS family. Mg(2+) serves as cofactor.

It is found in the cytoplasm. It carries out the reaction apo-[ACP] + CoA = holo-[ACP] + adenosine 3',5'-bisphosphate + H(+). Functionally, transfers the 4'-phosphopantetheine moiety from coenzyme A to a Ser of acyl-carrier-protein. The sequence is that of Holo-[acyl-carrier-protein] synthase from Burkholderia orbicola (strain MC0-3).